Here is a 166-residue protein sequence, read N- to C-terminus: Cyclin-dependent kinase 4 inhibitor D (166 aa).

Methionine 1 carries the N-acetylmethionine modification. ANK repeat units lie at residues 41 to 69 (FGKTALQVMMFGSPTIALELLKQGASPNV), 73 to 102 (SGTTPAHDAARTGFLDTLKVLVEHGADVNA), 106 to 135 (TGALPIHLAVREGHTSVVSFLATESDLHHR), and 138 to 166 (TGLTPLELARGRGAQELMDILQRHTVAPL).

The protein belongs to the CDKN2 cyclin-dependent kinase inhibitor family. As to quaternary structure, interacts with CDK6.

Its subcellular location is the nucleus. The protein localises to the cytoplasm. Functionally, interacts strongly with CDK4 and CDK6 and inhibits them. This Bos taurus (Bovine) protein is Cyclin-dependent kinase 4 inhibitor D (CDKN2D).